Reading from the N-terminus, the 204-residue chain is Thymidine kinase (204 aa).

ATP-binding positions include 18–25 (GSMFSGKT) and 91–94 (DEGQ). The Proton acceptor role is filled by Glu-92. Cys-148, Cys-151, Cys-180, and His-183 together coordinate Zn(2+).

It belongs to the thymidine kinase family. Homotetramer.

It is found in the cytoplasm. The catalysed reaction is thymidine + ATP = dTMP + ADP + H(+). The protein is Thymidine kinase of Bdellovibrio bacteriovorus (strain ATCC 15356 / DSM 50701 / NCIMB 9529 / HD100).